Consider the following 191-residue polypeptide: Cell division protein SepF (191 aa).

The span at 151–164 shows a compositional bias: low complexity; it reads SSSPEEASPSSVST. A disordered region spans residues 151–191; it reads SSSPEEASPSSVSTEKTPQYSLGKNTTPEPAWGNSKLSAYS. The segment covering 165–178 has biased composition (polar residues); that stretch reads EKTPQYSLGKNTTP.

This sequence belongs to the SepF family. In terms of assembly, homodimer. Interacts with FtsZ.

The protein localises to the cytoplasm. In terms of biological role, cell division protein that is part of the divisome complex and is recruited early to the Z-ring. Probably stimulates Z-ring formation, perhaps through the cross-linking of FtsZ protofilaments. Its function overlaps with FtsA. The sequence is that of Cell division protein SepF from Prochlorococcus marinus (strain MIT 9301).